Consider the following 930-residue polypeptide: F-box only protein 11 (930 aa).

The segment at 1–150 is disordered; it reads MNSVRAANRR…RVSGKSQDLS (150 aa). Positions 7–16 are enriched in basic residues; the sequence is ANRRPRRVSR. Low complexity predominate over residues 17–27; the sequence is PRPVQQQQQQP. Residues 28-73 are compositionally biased toward pro residues; the sequence is PQQPPPQPPQQQPPPQPPQQPPQQQPPPPPQQQPPPPPPPPPPPPQ. The span at 117 to 132 shows a compositional bias: polar residues; sequence PTKSSMEGASTSTTEN. The F-box domain maps to 156 to 202; sequence QYLQEKLPDEVVLKIFSYLLEQDLCRAACVCKRFSELANDPILWKRL. PbH1 repeat units follow at residues 398-420, 421-443, 444-466, 467-489, 490-512, 513-535, 536-558, 559-581, 582-604, 605-627, 628-650, 651-673, 674-696, 697-719, 720-742, 743-765, 766-788, 789-811, and 812-833; these read GACP…YITD, HAQG…WVKN, HGNP…FTFD, HGMG…EVKA, YANP…YVHE, KGRG…WITS, NSDP…YIFG, DGRG…QIRT, NSCP…YVHE, KGQG…WVTT, GSTP…YFYD, NGHG…QIRT, GSNP…LVYN, SGLG…WIKT, DSNP…CIFN, GGRG…LIST, NSHP…EITN, HATA…FLAS, and GVNV…EKAV. The UBR-type zinc-finger motif lies at 836-907; sequence GQCLYKISSY…LSNPCTLAGE (72 aa).

As to quaternary structure, component of the SCF(FBXO11) complex consisting of CUL1, RBX1, SKP1 and FBXO11. Interacts with CIITA. As to expression, at 9.5 dpc and 10.5 dpc, expression is restricted to developing heart tissue. By 11.5 dpc and 12.5 dpc, detected in liver and subsequently in muscle by 13.5 dpc. At 14.5 dpc, still detected in heart, liver and muscle and also in the developing secondary palate including the nasal, medial and oral epithelia of the palatal shelves. At 15.5 dpc and 16.5 dpc, expressed in lung, kidney, heart, liver, muscle and adrenal gland. At this time, fusion of the palate shelves has occurred, with expression confined to the nasal and oral epithelia. At 17.5 dpc, expression in the lung is confined to bronchial epithelial cells and is evident in bone marrow, skin, tissue macrophages, osteoblasts, kidney, liver and spleen. At 18.5 dpc, expressed in bone marrow, liver, kidney and muscle but decreases in heart and lung. At this time, first detected in the middle ear epithelium. At the newborn stage, expression is strong in the middle ear where it is confined to mucin-secreting cells, as well as persisting in bone marrow, kidney and liver. Middle ear expression persists in postnatal head tissue at 4 and 13 days after birth and has declined by 21 days after birth. In the adult, expression is seen in alveolar macrophages of the lung, glomeruli and collecting tubules of the kidney, midbrain, heart and muscle.

It localises to the nucleus. It is found in the chromosome. Its pathway is protein modification; protein ubiquitination. Its function is as follows. Substrate recognition component of a SCF (SKP1-CUL1-F-box protein) E3 ubiquitin-protein ligase complex which mediates the ubiquitination and subsequent proteasomal degradation of target proteins, such as DTL/CDT2, BCL6, SNAI1 and PRDM1/BLIMP1. The SCF(FBXO11) complex mediates ubiquitination and degradation of BCL6, thereby playing a role in the germinal center B-cells terminal differentiation toward memory B-cells and plasma cells. The SCF(FBXO11) complex also mediates ubiquitination and degradation of DTL, an important step for the regulation of TGF-beta signaling, cell migration and the timing of the cell-cycle progression and exit. The SCF(FBXO11) complex also catalyzes ubiquitination and degradation of GSK3B-phosphorylated SNAI1. Binds to and neddylates phosphorylated p53/TP53, inhibiting its transcriptional activity. Plays a role in the regulatiom of erythropoiesis but not myelopoiesis or megakaryopoiesis. Mechanistically, activates erythroid genes by mediating the degradation of BAHD1, a heterochromatin-associated protein that recruits corepressors to H3K27me3 marks. Participates in macrophage cell death and inflammation in response to bacterial toxins by regulating the expression of complement 5a receptor 1/C5AR1 and IL-1beta. Acts as a critical regulator to determine the level of MHC-II by mediating the recognition of degron at the P/S/T domain of CIITA leading to its ubiquitination and subsequent degradation via the proteasome. Participates in the antiviral repsonse by initiating the activation of TBK1-IRF3-IFN-I axis. Mediates the 'Lys-63'-linked ubiquitination of TRAF3 to strengthen the interaction between TRAF3 and TBK1. This is F-box only protein 11 from Mus musculus (Mouse).